The primary structure comprises 218 residues: Ribose-5-phosphate isomerase A (218 aa).

Substrate-binding positions include 28–31 (TGST), 81–84 (DGAD), and 94–97 (KGGG). Glutamate 103 acts as the Proton acceptor in catalysis. Residue lysine 121 coordinates substrate.

Belongs to the ribose 5-phosphate isomerase family. As to quaternary structure, homodimer.

The catalysed reaction is aldehydo-D-ribose 5-phosphate = D-ribulose 5-phosphate. It functions in the pathway carbohydrate degradation; pentose phosphate pathway; D-ribose 5-phosphate from D-ribulose 5-phosphate (non-oxidative stage): step 1/1. Its function is as follows. Catalyzes the reversible conversion of ribose-5-phosphate to ribulose 5-phosphate. This Methylococcus capsulatus (strain ATCC 33009 / NCIMB 11132 / Bath) protein is Ribose-5-phosphate isomerase A.